The primary structure comprises 518 residues: Membrane-bound lytic murein transglycosylase F (518 aa).

A signal peptide spans 1–21 (MKKLKINYLFIGILALLLAVA). The segment at 22 to 269 (LWPSIPWFGK…RIEEKYLGHG (248 aa)) is non-LT domain. The LT domain stretch occupies residues 270–518 (DDFDYVDTRT…SRKGSEEKQN (249 aa)). Glu314 is an active-site residue.

It in the N-terminal section; belongs to the bacterial solute-binding protein 3 family. In the C-terminal section; belongs to the transglycosylase Slt family.

The protein localises to the cell outer membrane. It catalyses the reaction Exolytic cleavage of the (1-&gt;4)-beta-glycosidic linkage between N-acetylmuramic acid (MurNAc) and N-acetylglucosamine (GlcNAc) residues in peptidoglycan, from either the reducing or the non-reducing ends of the peptidoglycan chains, with concomitant formation of a 1,6-anhydrobond in the MurNAc residue.. Functionally, murein-degrading enzyme that degrades murein glycan strands and insoluble, high-molecular weight murein sacculi, with the concomitant formation of a 1,6-anhydromuramoyl product. Lytic transglycosylases (LTs) play an integral role in the metabolism of the peptidoglycan (PG) sacculus. Their lytic action creates space within the PG sacculus to allow for its expansion as well as for the insertion of various structures such as secretion systems and flagella. This is Membrane-bound lytic murein transglycosylase F from Escherichia coli O6:K15:H31 (strain 536 / UPEC).